Consider the following 196-residue polypeptide: UMP-CMP kinase (196 aa).

13 to 18 contributes to the ATP binding site; sequence GAGKGT. Residues 33–63 form an NMP region; the sequence is SAGDLLRDERKKPDSQYGELIESYIRDGRIV. A ribonucleoside 5'-phosphate-binding positions include arginine 39, 61–63, and 93–96; these read RIV and GFPR. A CMP-binding site is contributed by asparagine 100. The interval 133 to 143 is LID; the sequence is ERGKSSGRSDD. Arginine 134 is an ATP binding site. Positions 140 and 151 each coordinate a ribonucleoside 5'-phosphate. Residue lysine 179 participates in ATP binding.

The protein belongs to the adenylate kinase family. UMP-CMP kinase subfamily. As to quaternary structure, monomer. It depends on Mg(2+) as a cofactor.

It localises to the cytoplasm. Its subcellular location is the nucleus. The catalysed reaction is CMP + ATP = CDP + ADP. It carries out the reaction dCMP + ATP = dCDP + ADP. The enzyme catalyses UMP + ATP = UDP + ADP. It catalyses the reaction a 2'-deoxyribonucleoside 5'-diphosphate + ATP = a 2'-deoxyribonucleoside 5'-triphosphate + ADP. The catalysed reaction is a ribonucleoside 5'-diphosphate + ATP = a ribonucleoside 5'-triphosphate + ADP. In terms of biological role, catalyzes the phosphorylation of pyrimidine nucleoside monophosphates at the expense of ATP. Plays an important role in de novo pyrimidine nucleotide biosynthesis. Has preference for UMP and CMP as phosphate acceptors. Also displays broad nucleoside diphosphate kinase activity. In Xenopus tropicalis (Western clawed frog), this protein is UMP-CMP kinase (cmpk1).